Reading from the N-terminus, the 84-residue chain is Kunitz-type serine protease inhibitor 2 (84 aa).

The first 24 residues, 1-24 (MSSGGLLLLLGLLTLWAEPTPISG), serve as a signal peptide directing secretion. Residue Gln-25 is modified to Pyrrolidone carboxylic acid. In terms of domain architecture, BPTI/Kunitz inhibitor spans 31-81 (CFLRPDFGRYGHPRPRFYYNPATNQCQGFLAQRSRENTNNFDTRDKCRQTC). Disulfide bonds link Cys-31–Cys-81 and Cys-56–Cys-77.

This sequence belongs to the venom Kunitz-type family. In terms of tissue distribution, expressed by the venom gland.

The protein resides in the secreted. Its function is as follows. Serine protease inhibitor. The polypeptide is Kunitz-type serine protease inhibitor 2 (Daboia russelii (Russel's viper)).